Here is a 341-residue protein sequence, read N- to C-terminus: Trans-3-hydroxy-L-proline dehydratase (341 aa).

The active-site Proton acceptor is Ser90. Substrate-binding positions include 91-92 (GS), Asp252, and 257-258 (GT).

Belongs to the proline racemase family.

The catalysed reaction is trans-3-hydroxy-L-proline = 1-pyrroline-2-carboxylate + H2O. Functionally, catalyzes the dehydration of trans-3-hydroxy-L-proline (t3LHyp) to Delta(1)-pyrroline-2-carboxylate (Pyr2C). May be involved in a degradation pathway of t3LHyp, which would allow L.aggregata to grow on t3LHyp as a sole carbon source. Displays neither proline racemase activity nor 4-hydroxyproline 2-epimerase activity. The protein is Trans-3-hydroxy-L-proline dehydratase of Roseibium aggregatum (strain ATCC 25650 / DSM 13394 / JCM 20685 / NBRC 16684 / NCIMB 2208 / IAM 12614 / B1) (Stappia aggregata).